The sequence spans 488 residues: Kelch-like protein 15 (488 aa).

In terms of domain architecture, BTB spans 31-98; it reads LDVTLVIEDH…MYYGTIELSM (68 aa). The region spanning 133-237 is the BACK domain; it reads CAEIMRLLDD…TPSSVFEKVK (105 aa). 3 Kelch repeats span residues 328–379, 381–426, and 428–473; these read FVFL…VIGR, VYAV…VLGN, and LYIT…NKCK.

Homodimer. Interacts with CUL3.

The protein localises to the nucleus. It functions in the pathway protein modification; protein ubiquitination. Functionally, substrate-specific adapter for CUL3 E3 ubiquitin-protein ligase complex. In Gallus gallus (Chicken), this protein is Kelch-like protein 15 (KLHL15).